The sequence spans 159 residues: Large ribosomal subunit protein uL22 (159 aa).

This sequence belongs to the universal ribosomal protein uL22 family. Part of the 50S ribosomal subunit.

Its function is as follows. This protein binds specifically to 23S rRNA. It makes multiple contacts with different domains of the 23S rRNA in the assembled 50S subunit and ribosome. In terms of biological role, the globular domain of the protein is located near the polypeptide exit tunnel on the outside of the subunit, while an extended beta-hairpin is found that lines the wall of the exit tunnel in the center of the 70S ribosome. The protein is Large ribosomal subunit protein uL22 of Ignicoccus hospitalis (strain KIN4/I / DSM 18386 / JCM 14125).